The following is a 243-amino-acid chain: 2-C-methyl-D-erythritol 4-phosphate cytidylyltransferase (243 aa).

The protein belongs to the IspD/TarI cytidylyltransferase family. IspD subfamily.

The catalysed reaction is 2-C-methyl-D-erythritol 4-phosphate + CTP + H(+) = 4-CDP-2-C-methyl-D-erythritol + diphosphate. Its pathway is isoprenoid biosynthesis; isopentenyl diphosphate biosynthesis via DXP pathway; isopentenyl diphosphate from 1-deoxy-D-xylulose 5-phosphate: step 2/6. Catalyzes the formation of 4-diphosphocytidyl-2-C-methyl-D-erythritol from CTP and 2-C-methyl-D-erythritol 4-phosphate (MEP). In Chlorobium phaeovibrioides (strain DSM 265 / 1930) (Prosthecochloris vibrioformis (strain DSM 265)), this protein is 2-C-methyl-D-erythritol 4-phosphate cytidylyltransferase.